Consider the following 310-residue polypeptide: HPr kinase/phosphorylase (310 aa).

Catalysis depends on residues His138 and Lys159. Residue 153–160 (GGSGVGKS) coordinates ATP. A Mg(2+)-binding site is contributed by Ser160. The Proton acceptor; for phosphorylation activity. Proton donor; for dephosphorylation activity role is filled by Asp177. The interval 201-210 (LEIRGLGIIN) is important for the catalytic mechanism of both phosphorylation and dephosphorylation. Glu202 contacts Mg(2+). Arg243 is an active-site residue. Residues 264-269 (PVRPGR) are important for the catalytic mechanism of dephosphorylation.

This sequence belongs to the HPrK/P family. As to quaternary structure, homohexamer. The cofactor is Mg(2+).

The enzyme catalyses [HPr protein]-L-serine + ATP = [HPr protein]-O-phospho-L-serine + ADP + H(+). It catalyses the reaction [HPr protein]-O-phospho-L-serine + phosphate + H(+) = [HPr protein]-L-serine + diphosphate. Functionally, catalyzes the ATP- as well as the pyrophosphate-dependent phosphorylation of a specific serine residue in HPr, a phosphocarrier protein of the phosphoenolpyruvate-dependent sugar phosphotransferase system (PTS). HprK/P also catalyzes the pyrophosphate-producing, inorganic phosphate-dependent dephosphorylation (phosphorolysis) of seryl-phosphorylated HPr (P-Ser-HPr). The two antagonistic activities of HprK/P are regulated by several intracellular metabolites, which change their concentration in response to the absence or presence of rapidly metabolisable carbon sources (glucose, fructose, etc.) in the growth medium. Also phosphorylates/dephosphorylates the HPr-like catabolite repression protein crh on a specific serine residue. Therefore, by controlling the phosphorylation state of HPr and crh, HPrK/P is a sensor enzyme that plays a major role in the regulation of carbon metabolism and sugar transport: it mediates carbon catabolite repression (CCR), and regulates PTS-catalyzed carbohydrate uptake and inducer exclusion. The sequence is that of HPr kinase/phosphorylase from Shouchella clausii (strain KSM-K16) (Alkalihalobacillus clausii).